The following is a 646-amino-acid chain: Lipoteichoic acid synthase (646 aa).

Residues methionine 1–lysine 7 are Cytoplasmic-facing. Residues isoleucine 8 to serine 28 traverse the membrane as a helical segment. The Extracellular segment spans residues tyrosine 29–asparagine 43. A helical transmembrane segment spans residues leucine 44–phenylalanine 64. Residues lysine 65 to lysine 68 are Cytoplasmic-facing. Residues alanine 69–valine 89 form a helical membrane-spanning segment. The Extracellular portion of the chain corresponds to tyrosine 90–serine 119. Residues phenylalanine 120–phenylalanine 140 traverse the membrane as a helical segment. The Cytoplasmic segment spans residues lysine 141–lysine 153. The chain crosses the membrane as a helical span at residues phenylalanine 154–glutamate 174. Residues threonine 175–lysine 646 lie on the Extracellular side of the membrane. Residues glutamate 255 and threonine 300 each contribute to the Mn(2+) site. Threonine 300 is a catalytic residue. Histidine 416 is a substrate binding site. Aspartate 475 and histidine 476 together coordinate Mn(2+). Over residues asparagine 623–threonine 638 the composition is skewed to basic and acidic residues. Positions asparagine 623–lysine 646 are disordered.

This sequence belongs to the LTA synthase family. Post-translationally, proteolytically cleaved.

It localises to the cell membrane. The protein localises to the secreted. It functions in the pathway cell wall biogenesis; lipoteichoic acid biosynthesis. Catalyzes the polymerization of lipoteichoic acid (LTA) polyglycerol phosphate, a reaction that presumably uses phosphatidylglycerol (PG) as substrate. Is required for staphylococcal growth and cell division process. The chain is Lipoteichoic acid synthase (ltaS) from Staphylococcus aureus (strain USA300).